The sequence spans 419 residues: Protein FAM217A (419 aa).

4 disordered regions span residues 1-60 (MGRK…LENP), 96-119 (KGST…DLSE), 236-299 (SSSK…SRAL), and 317-382 (KNSK…RTKK). The span at 7 to 19 (ESCSSSLHVSSIS) shows a compositional bias: low complexity. Positions 236–251 (SSSKAIATKAKAPKIP) are enriched in low complexity. 2 stretches are compositionally biased toward polar residues: residues 252–261 (ETSTLQTSGV) and 271–281 (NSGSGKPEQNV). Composition is skewed to low complexity over residues 282–296 (SKWS…KSNS) and 334–345 (PTTTTQATQPMA).

Belongs to the FAM217 family.

This Mus musculus (Mouse) protein is Protein FAM217A (Fam217a).